A 295-amino-acid chain; its full sequence is Proline iminopeptidase (295 aa).

In terms of domain architecture, AB hydrolase-1 spans 29–279 (PLLLLHGGPG…GCGHMPFVQE (251 aa)). Serine 107 (nucleophile) is an active-site residue. The active site involves aspartate 246. Histidine 273 serves as the catalytic Proton donor.

Belongs to the peptidase S33 family.

It localises to the cell envelope. The catalysed reaction is Release of N-terminal proline from a peptide.. Functionally, releases the N-terminal proline from various substrates. The polypeptide is Proline iminopeptidase (Lactobacillus delbrueckii subsp. bulgaricus (strain ATCC 11842 / DSM 20081 / BCRC 10696 / JCM 1002 / NBRC 13953 / NCIMB 11778 / NCTC 12712 / WDCM 00102 / Lb 14)).